The primary structure comprises 402 residues: Leucine aminopeptidase 1 (402 aa).

The first 18 residues, 1–18 (MKISNASLLALLLPAASA), serve as a signal peptide directing secretion. Residues 19 to 92 (RFVEQAEQNR…GTFNKRPYKK (74 aa)) constitute a propeptide that is removed on maturation. N111 and N184 each carry an N-linked (GlcNAc...) asparagine glycan. 4 residues coordinate Zn(2+): H192, D211, E250, and D277. Residue N304 is glycosylated (N-linked (GlcNAc...) asparagine). C326 and C330 form a disulfide bridge. H359 is a Zn(2+) binding site.

The protein belongs to the peptidase M28 family. M28E subfamily. As to quaternary structure, monomer. Zn(2+) is required as a cofactor.

The protein localises to the secreted. Extracellular aminopeptidase that allows assimilation of proteinaceous substrates. The polypeptide is Leucine aminopeptidase 1 (lap1) (Neurospora crassa (strain ATCC 24698 / 74-OR23-1A / CBS 708.71 / DSM 1257 / FGSC 987)).